The chain runs to 62 residues: Photosystem II reaction center protein Z (62 aa).

Helical transmembrane passes span 8–28 and 41–61; these read AVFA…LVFA and FSGT…NSLI.

The protein belongs to the PsbZ family. In terms of assembly, PSII is composed of 1 copy each of membrane proteins PsbA, PsbB, PsbC, PsbD, PsbE, PsbF, PsbH, PsbI, PsbJ, PsbK, PsbL, PsbM, PsbT, PsbY, PsbZ, Psb30/Ycf12, at least 3 peripheral proteins of the oxygen-evolving complex and a large number of cofactors. It forms dimeric complexes.

The protein localises to the plastid. It is found in the chloroplast thylakoid membrane. In terms of biological role, may control the interaction of photosystem II (PSII) cores with the light-harvesting antenna, regulates electron flow through the 2 photosystem reaction centers. PSII is a light-driven water plastoquinone oxidoreductase, using light energy to abstract electrons from H(2)O, generating a proton gradient subsequently used for ATP formation. This Hordeum vulgare (Barley) protein is Photosystem II reaction center protein Z.